Consider the following 711-residue polypeptide: Methionine--tRNA ligase (711 aa).

The 'HIGH' region motif lies at proline 15–histidine 25. Cysteine 147, cysteine 150, cysteine 160, and cysteine 163 together coordinate Zn(2+). Residues lysine 336–serine 340 carry the 'KMSKS' region motif. Threonine 339 serves as a coordination point for ATP. A tRNA-binding domain is found at aspartate 610–asparagine 711.

This sequence belongs to the class-I aminoacyl-tRNA synthetase family. MetG type 1 subfamily. In terms of assembly, homodimer. It depends on Zn(2+) as a cofactor.

It is found in the cytoplasm. It catalyses the reaction tRNA(Met) + L-methionine + ATP = L-methionyl-tRNA(Met) + AMP + diphosphate. In terms of biological role, is required not only for elongation of protein synthesis but also for the initiation of all mRNA translation through initiator tRNA(fMet) aminoacylation. This is Methionine--tRNA ligase from Flavobacterium johnsoniae (strain ATCC 17061 / DSM 2064 / JCM 8514 / BCRC 14874 / CCUG 350202 / NBRC 14942 / NCIMB 11054 / UW101) (Cytophaga johnsonae).